The sequence spans 349 residues: Anthranilate phosphoribosyltransferase (349 aa).

5-phospho-alpha-D-ribose 1-diphosphate contacts are provided by residues Gly82, 85 to 86 (GD), 92 to 95 (NVST), 110 to 118 (KHGNRAVSG), and Ser122. Gly82 lines the anthranilate pocket. Ser94 provides a ligand contact to Mg(2+). Asn113 is an anthranilate binding site. Arg168 is a binding site for anthranilate. Positions 227 and 228 each coordinate Mg(2+).

Belongs to the anthranilate phosphoribosyltransferase family. Homodimer. Mg(2+) is required as a cofactor.

The enzyme catalyses N-(5-phospho-beta-D-ribosyl)anthranilate + diphosphate = 5-phospho-alpha-D-ribose 1-diphosphate + anthranilate. The protein operates within amino-acid biosynthesis; L-tryptophan biosynthesis; L-tryptophan from chorismate: step 2/5. Its function is as follows. Catalyzes the transfer of the phosphoribosyl group of 5-phosphorylribose-1-pyrophosphate (PRPP) to anthranilate to yield N-(5'-phosphoribosyl)-anthranilate (PRA). In Pseudomonas putida (strain ATCC 700007 / DSM 6899 / JCM 31910 / BCRC 17059 / LMG 24140 / F1), this protein is Anthranilate phosphoribosyltransferase.